The sequence spans 501 residues: Cytoplasmic tRNA 2-thiolation protein 2 (501 aa).

Residues 1–12 show a composition bias toward basic and acidic residues; it reads MCEMSEEYRESA. Disordered regions lie at residues 1–23 and 192–214; these read MCEM…RLGT and GVER…PTTA. Position 2 is an N-acetylcysteine (cysteine 2). At serine 492 the chain carries Phosphoserine.

This sequence belongs to the CTU2/NCS2 family. As to quaternary structure, component of a complex at least composed of URM1, CTU2/NCS2 and CTU1/ATPBD3.

It localises to the cytoplasm. Its pathway is tRNA modification; 5-methoxycarbonylmethyl-2-thiouridine-tRNA biosynthesis. In terms of biological role, plays a central role in 2-thiolation of mcm(5)S(2)U at tRNA wobble positions of tRNA(Lys), tRNA(Glu) and tRNA(Gln). May act by forming a heterodimer with CTU1/ATPBD3 that ligates sulfur from thiocarboxylated URM1 onto the uridine of tRNAs at wobble position. The polypeptide is Cytoplasmic tRNA 2-thiolation protein 2 (Bos taurus (Bovine)).